We begin with the raw amino-acid sequence, 350 residues long: Tetraacyldisaccharide 4'-kinase (350 aa).

Serine 48–threonine 55 is a binding site for ATP.

Belongs to the LpxK family.

It carries out the reaction a lipid A disaccharide + ATP = a lipid IVA + ADP + H(+). It functions in the pathway glycolipid biosynthesis; lipid IV(A) biosynthesis; lipid IV(A) from (3R)-3-hydroxytetradecanoyl-[acyl-carrier-protein] and UDP-N-acetyl-alpha-D-glucosamine: step 6/6. Functionally, transfers the gamma-phosphate of ATP to the 4'-position of a tetraacyldisaccharide 1-phosphate intermediate (termed DS-1-P) to form tetraacyldisaccharide 1,4'-bis-phosphate (lipid IVA). In Chlorobium limicola (strain DSM 245 / NBRC 103803 / 6330), this protein is Tetraacyldisaccharide 4'-kinase.